We begin with the raw amino-acid sequence, 121 residues long: Small ribosomal subunit protein uS13 (121 aa).

Residues 92 to 121 (RKGLPMRGQRTRTNARTRKGPRRAAQALKK) form a disordered region.

This sequence belongs to the universal ribosomal protein uS13 family. As to quaternary structure, part of the 30S ribosomal subunit. Forms a loose heterodimer with protein S19. Forms two bridges to the 50S subunit in the 70S ribosome.

Functionally, located at the top of the head of the 30S subunit, it contacts several helices of the 16S rRNA. In the 70S ribosome it contacts the 23S rRNA (bridge B1a) and protein L5 of the 50S subunit (bridge B1b), connecting the 2 subunits; these bridges are implicated in subunit movement. Contacts the tRNAs in the A and P-sites. This Burkholderia thailandensis (strain ATCC 700388 / DSM 13276 / CCUG 48851 / CIP 106301 / E264) protein is Small ribosomal subunit protein uS13.